Consider the following 324-residue polypeptide: Acetyl-coenzyme A carboxylase carboxyl transferase subunit alpha (324 aa).

Residues 44–298 (QLERRAEELR…KQTLIDTIDE (255 aa)) enclose the CoA carboxyltransferase C-terminal domain.

This sequence belongs to the AccA family. As to quaternary structure, acetyl-CoA carboxylase is a heterohexamer composed of biotin carboxyl carrier protein (AccB), biotin carboxylase (AccC) and two subunits each of ACCase subunit alpha (AccA) and ACCase subunit beta (AccD).

It localises to the cytoplasm. It carries out the reaction N(6)-carboxybiotinyl-L-lysyl-[protein] + acetyl-CoA = N(6)-biotinyl-L-lysyl-[protein] + malonyl-CoA. The protein operates within lipid metabolism; malonyl-CoA biosynthesis; malonyl-CoA from acetyl-CoA: step 1/1. Its function is as follows. Component of the acetyl coenzyme A carboxylase (ACC) complex. First, biotin carboxylase catalyzes the carboxylation of biotin on its carrier protein (BCCP) and then the CO(2) group is transferred by the carboxyltransferase to acetyl-CoA to form malonyl-CoA. The polypeptide is Acetyl-coenzyme A carboxylase carboxyl transferase subunit alpha (Rippkaea orientalis (strain PCC 8801 / RF-1) (Cyanothece sp. (strain PCC 8801))).